Reading from the N-terminus, the 170-residue chain is Large ribosomal subunit protein uL18m (170 aa).

The protein belongs to the universal ribosomal protein uL18 family. As to quaternary structure, component of the mitochondrial ribosome large subunit (39S) which comprises a 16S rRNA and about 50 distinct proteins.

It is found in the mitochondrion. The polypeptide is Large ribosomal subunit protein uL18m (mrpl-18) (Caenorhabditis elegans).